The sequence spans 175 residues: Bifunctional protein PyrR (175 aa).

Residues 97-109 (IVLIDDVLFTGRT) carry the PRPP-binding motif.

This sequence belongs to the purine/pyrimidine phosphoribosyltransferase family. PyrR subfamily. As to quaternary structure, homodimer and homohexamer; in equilibrium.

The catalysed reaction is UMP + diphosphate = 5-phospho-alpha-D-ribose 1-diphosphate + uracil. In terms of biological role, regulates transcriptional attenuation of the pyrimidine nucleotide (pyr) operon by binding in a uridine-dependent manner to specific sites on pyr mRNA. This disrupts an antiterminator hairpin in the RNA and favors formation of a downstream transcription terminator, leading to a reduced expression of downstream genes. Also displays a weak uracil phosphoribosyltransferase activity which is not physiologically significant. The polypeptide is Bifunctional protein PyrR (Leuconostoc mesenteroides subsp. mesenteroides (strain ATCC 8293 / DSM 20343 / BCRC 11652 / CCM 1803 / JCM 6124 / NCDO 523 / NBRC 100496 / NCIMB 8023 / NCTC 12954 / NRRL B-1118 / 37Y)).